The following is a 57-amino-acid chain: U17-myrmicitoxin-Tb1a (57 aa).

The first 29 residues, 1–29 (MEKNRTNIFSVYLMITFLLISIFITMVMS), serve as a signal peptide directing secretion. A propeptide spanning residues 30 to 33 (DGEA) is cleaved from the precursor. Cysteine 42 and cysteine 53 are oxidised to a cystine. Residue alanine 56 is modified to Alanine amide.

O-glycosylated. In terms of tissue distribution, expressed by the venom gland.

It is found in the secreted. Functionally, serine protease inhibitor which exhibits antifibrinolytic, antielastolytic and antimicrobial activities. Displays antimicrobial activity against bacteria and fungi. Likely functions in the innate immune response to microbial infection and possibly in the venom, as an antifibrinolytic agent. The protein is U17-myrmicitoxin-Tb1a of Tetramorium bicarinatum (Tramp ant).